The primary structure comprises 403 residues: Tyrosine--tRNA ligase (403 aa).

Positions 46–55 (PTAPDLHLGH) match the 'HIGH' region motif. Positions 230-234 (KMSKS) match the 'KMSKS' region motif. Lys233 lines the ATP pocket. In terms of domain architecture, S4 RNA-binding spans 342–402 (LFITQILNQA…GKKAYAKVTV (61 aa)).

This sequence belongs to the class-I aminoacyl-tRNA synthetase family. TyrS type 2 subfamily. Homodimer.

The protein localises to the cytoplasm. It carries out the reaction tRNA(Tyr) + L-tyrosine + ATP = L-tyrosyl-tRNA(Tyr) + AMP + diphosphate + H(+). Functionally, catalyzes the attachment of tyrosine to tRNA(Tyr) in a two-step reaction: tyrosine is first activated by ATP to form Tyr-AMP and then transferred to the acceptor end of tRNA(Tyr). This Psychrobacter arcticus (strain DSM 17307 / VKM B-2377 / 273-4) protein is Tyrosine--tRNA ligase.